The sequence spans 143 residues: Class I hydrophobin 20 (143 aa).

The first 22 residues, 1–22 (MLSHPMKLLFFVFALSALLAAA), serve as a signal peptide directing secretion. Cystine bridges form between C54–C123, C62–C117, C63–C102, and C124–C137.

Belongs to the fungal hydrophobin family. As to quaternary structure, self-assembles to form functional amyloid fibrils called rodlets. Self-assembly into fibrillar rodlets occurs spontaneously at hydrophobic:hydrophilic interfaces and the rodlets further associate laterally to form amphipathic monolayers.

It is found in the secreted. Its subcellular location is the cell wall. In terms of biological role, aerial growth, conidiation, and dispersal of filamentous fungi in the environment rely upon a capability of their secreting small amphipathic proteins called hydrophobins (HPBs) with low sequence identity. Class I can self-assemble into an outermost layer of rodlet bundles on aerial cell surfaces, conferring cellular hydrophobicity that supports fungal growth, development and dispersal; whereas Class II form highly ordered films at water-air interfaces through intermolecular interactions but contribute nothing to the rodlet structure. Hydph20 is a class I hydrophobin involved in mycelial growth. The chain is Class I hydrophobin 20 from Pleurotus ostreatus (strain PC15) (Oyster mushroom).